Reading from the N-terminus, the 937-residue chain is MAAAVPRLTSGGAVRIRIRCGELGTTKWREGVIEIQERDNKINLLVKFNSGGAPRVFQLSHNVKSVSWFQTHGPNRMTLTLKDSCIVMMDKLNMLVAKKMKEYLETVKLGKPAVFKTNQGSASFGLVLGNRTAQNDSGLSPSDKQSAPRRSSLDSREDSTPRKPLGSPSRVTSTPARGSLSEIRSEKRKRLMNSDGDLTEDYPKENDSSSNNKAITDSSRKFLLSCKDKLKQSEENRASAPHTPAPLQPTSFYGSRTGAKDYTQTHSFLDRPSSTGSCPSAKRSLVLPNHSTPFKKVRPTLDYGGWNKPRPSVLAQPQPPLQGFSNLGNTCYMNAILQSLFSLPSFSNDLLKQGIPWKRVPINALLRRFAHLLAKKDISPPEVKKDLLRRVKNAISSTAERFSGYMQNDAHEFLSQCLDQLKEDVEKINKSWKNEPSAWDEPQSTRLADEVDTSRIYTCPVTVNMEFEVQHTITCKSCGEVVLKREQFNDLSIDLPRRRKTLPMRSIQDSLDLFFRMEEIEYSCEKCSGKAATVSHKFSRLPRVLILHLKRYSYNTQLSLNSKLGQQVLIPKYLTLLSHCTDATRSPLSLGWSAQNALSRTLKISQSVNSSTLRRASQRPESSGSVLCDSDSDEELVRKVARKHHPDDDRADELQQHHPHAAVEQSEFNGINDEEMLAAVLEMSRHDTSLCAGPDEEPSSSPDTGFGDADAHDLTQHLELLDAEKQPTDALESLDLTMDENKENQTPDGLQGELDWVQQYSLEQEREEQELQQALAQSLQEQEAREMREDDDLKRATELSLQEFNNSLPELLCSDEDSGNEDGLDMEYSEAEAEELKKNAETGELPNSFRLISVVSHIGSSSSSGHYISDVYDMKKQSWLTYNDLDVSRTQESTVQRDRDRSGYIFFYMHKDVFEELSELEKAGVNTDGGRTVLQPL.

Residues 38-40 carry the KEN box 1 motif; the sequence is RDN. Short sequence motifs (D-box) lie at residues 76–84 and 101–110; these read RMTLTLKDS and KEYLETVKLG. Residues 132–149 show a composition bias toward polar residues; the sequence is TAQNDSGLSPSDKQSAPR. Disordered stretches follow at residues 132–216 and 232–258; these read TAQN…KAIT and QSEE…SRTG. A compositionally biased stretch (basic and acidic residues) spans 151-161; that stretch reads SSLDSREDSTP. A D-box 3 motif is present at residues 162-170; sequence RKPLGSPSR. The KEN box 2 motif lies at 204-206; the sequence is KEN. One can recognise a USP domain in the interval 322-911; sequence QGFSNLGNTC…SGYIFFYMHK (590 aa). C331 acts as the Nucleophile in catalysis. Positions 609–625 are enriched in polar residues; sequence NSSTLRRASQRPESSGS. Disordered stretches follow at residues 609 to 632 and 688 to 710; these read NSST…DSDS and TSLC…GDAD. Residues 672-691 enclose the UIM 1 domain; sequence NDEEMLAAVLEMSRHDTSLC. Residues 742–744 carry the KEN box 3 motif; that stretch reads KEN. 2 consecutive UIM domains span residues 766 to 785 and 788 to 807; these read REEQ…QEAR and REDD…FNNS. H866 (proton acceptor) is an active-site residue.

It belongs to the peptidase C19 family.

It catalyses the reaction Thiol-dependent hydrolysis of ester, thioester, amide, peptide and isopeptide bonds formed by the C-terminal Gly of ubiquitin (a 76-residue protein attached to proteins as an intracellular targeting signal).. In terms of biological role, deubiquitinase that antagonizes the anaphase-promoting complex (APC/C) during G1/S transition by mediating deubiquitination of APC/C target proteins, thereby promoting S phase entry. Specifically mediates deubiquitination of 'Lys-11'-linked polyubiquitin chains, a specific ubiquitin-linkage type mediated by the APC/C complex. The protein is Ubiquitin carboxyl-terminal hydrolase 37 (usp37) of Danio rerio (Zebrafish).